A 308-amino-acid polypeptide reads, in one-letter code: Glutaminase 2 (308 aa).

The substrate site is built by Ser-66, Asn-117, Glu-161, Asn-168, Tyr-192, Tyr-244, and Val-262.

This sequence belongs to the glutaminase family. Homotetramer.

It catalyses the reaction L-glutamine + H2O = L-glutamate + NH4(+). This chain is Glutaminase 2, found in Shigella flexneri.